The primary structure comprises 312 residues: Probable phytanoyl-CoA dioxygenase (312 aa).

Residues Lys84, Met124, 142–144 (HQD), and Trp160 contribute to the 2-oxoglutarate site. Positions 142 and 144 each coordinate Fe cation. His231 is a binding site for Fe cation. The 2-oxoglutarate site is built by Ser233 and Arg242.

Belongs to the PhyH family. Requires Fe cation as cofactor. The cofactor is L-ascorbate.

The enzyme catalyses phytanoyl-CoA + 2-oxoglutarate + O2 = 2-hydroxyphytanoyl-CoA + succinate + CO2. It functions in the pathway lipid metabolism; fatty acid metabolism. In terms of biological role, converts phytanoyl-CoA to 2-hydroxyphytanoyl-CoA. This chain is Probable phytanoyl-CoA dioxygenase, found in Caenorhabditis elegans.